The following is a 340-amino-acid chain: Probable complex I intermediate-associated protein 30, mitochondrial (340 aa).

Belongs to the CIA30 family.

The protein resides in the mitochondrion. Functionally, chaperone protein involved in the assembly of the mitochondrial NADH:ubiquinone oxidoreductase complex (complex I). Required for normal growth and reproduction. In Caenorhabditis briggsae, this protein is Probable complex I intermediate-associated protein 30, mitochondrial (nuaf-1).